The sequence spans 224 residues: 2-phospho-L-lactate guanylyltransferase (224 aa).

The protein belongs to the CofC family. As to quaternary structure, homodimer.

The catalysed reaction is (2S)-2-phospholactate + GTP + H(+) = (2S)-lactyl-2-diphospho-5'-guanosine + diphosphate. It functions in the pathway cofactor biosynthesis; coenzyme F420 biosynthesis. Its function is as follows. Guanylyltransferase that catalyzes the activation of (2S)-2-phospholactate (2-PL) as (2S)-lactyl-2-diphospho-5'-guanosine, via the condensation of 2-PL with GTP. It is involved in the biosynthesis of coenzyme F420, a hydride carrier cofactor. This chain is 2-phospho-L-lactate guanylyltransferase, found in Methanobrevibacter smithii (strain ATCC 35061 / DSM 861 / OCM 144 / PS).